The sequence spans 110 residues: Large ribosomal subunit protein uL22 (110 aa).

The protein belongs to the universal ribosomal protein uL22 family. Part of the 50S ribosomal subunit.

This protein binds specifically to 23S rRNA; its binding is stimulated by other ribosomal proteins, e.g. L4, L17, and L20. It is important during the early stages of 50S assembly. It makes multiple contacts with different domains of the 23S rRNA in the assembled 50S subunit and ribosome. In terms of biological role, the globular domain of the protein is located near the polypeptide exit tunnel on the outside of the subunit, while an extended beta-hairpin is found that lines the wall of the exit tunnel in the center of the 70S ribosome. The chain is Large ribosomal subunit protein uL22 from Shewanella baltica (strain OS223).